A 291-amino-acid polypeptide reads, in one-letter code: Phosphatidylglycerol--prolipoprotein diacylglyceryl transferase (291 aa).

Helical transmembrane passes span 21 to 41 (VALHWYGLMYLVGFVFAMWLA), 60 to 80 (LLYAGFLGVFLGGRIGYVLFY), 96 to 116 (WDGGMSFHGGLIGVILVMIIF), 130 to 150 (FIAPLIPFGLGAGRLGNFING), 198 to 218 (SQLYELALEGVVLFIILNLFI), 225 to 245 (GAVSGLFLIGYGALRIIVEFF), and 260 to 280 (ISMGQILSIPMIIAGAIMMVW). An a 1,2-diacyl-sn-glycero-3-phospho-(1'-sn-glycerol)-binding site is contributed by Arg143.

Belongs to the Lgt family.

It localises to the cell inner membrane. It carries out the reaction L-cysteinyl-[prolipoprotein] + a 1,2-diacyl-sn-glycero-3-phospho-(1'-sn-glycerol) = an S-1,2-diacyl-sn-glyceryl-L-cysteinyl-[prolipoprotein] + sn-glycerol 1-phosphate + H(+). It functions in the pathway protein modification; lipoprotein biosynthesis (diacylglyceryl transfer). Its function is as follows. Catalyzes the transfer of the diacylglyceryl group from phosphatidylglycerol to the sulfhydryl group of the N-terminal cysteine of a prolipoprotein, the first step in the formation of mature lipoproteins. This Salmonella choleraesuis (strain SC-B67) protein is Phosphatidylglycerol--prolipoprotein diacylglyceryl transferase.